The following is a 203-amino-acid chain: Ras-related protein Rab-18 (203 aa).

Positions 20, 23, 24, 25, 26, 37, 38, 43, 69, 126, 128, and 155 each coordinate GTP. The Effector region motif lies at 40–48; the sequence is QAATIGVDF. 2 S-geranylgeranyl cysteine lipidation sites follow: cysteine 201 and cysteine 203. Cysteine 203 bears the Cysteine methyl ester mark.

This sequence belongs to the small GTPase superfamily. Rab family.

It carries out the reaction GTP + H2O = GDP + phosphate + H(+). Its function is as follows. The small GTPases Rab are key regulators of intracellular membrane trafficking, from the formation of transport vesicles to their fusion with membranes. Rabs cycle between an inactive GDP-bound form and an active GTP-bound form that is able to recruit to membranes different sets of downstream effectors directly responsible for vesicle formation, movement, tethering and fusion. Plays a role in apical endocytosis/recycling. May be implicated in transport between the plasma membrane and early endosomes. Plays a role in the shedding of pathogen spores from intestinal cells. The sequence is that of Ras-related protein Rab-18 (rab-18) from Caenorhabditis elegans.